A 222-amino-acid polypeptide reads, in one-letter code: Orotate phosphoribosyltransferase (222 aa).

Lys-29 is a 5-phospho-alpha-D-ribose 1-diphosphate binding site. 37–38 provides a ligand contact to orotate; that stretch reads FF. Residues 75-76, Arg-101, Lys-102, Lys-105, His-107, and 126-134 each bind 5-phospho-alpha-D-ribose 1-diphosphate; these read YK and DDVISAGTS. Orotate-binding residues include Ser-130 and Arg-158.

The protein belongs to the purine/pyrimidine phosphoribosyltransferase family. PyrE subfamily. As to quaternary structure, homodimer. Mg(2+) is required as a cofactor.

It carries out the reaction orotidine 5'-phosphate + diphosphate = orotate + 5-phospho-alpha-D-ribose 1-diphosphate. Its pathway is pyrimidine metabolism; UMP biosynthesis via de novo pathway; UMP from orotate: step 1/2. Catalyzes the transfer of a ribosyl phosphate group from 5-phosphoribose 1-diphosphate to orotate, leading to the formation of orotidine monophosphate (OMP). This is Orotate phosphoribosyltransferase from Polynucleobacter necessarius subsp. necessarius (strain STIR1).